A 240-amino-acid chain; its full sequence is C-type lectin domain family 4 member A (240 aa).

Over Met-1–Thr-48 the chain is Cytoplasmic. The ITIM motif motif lies at Ile-5–Val-10. Residues Ser-18–Ser-38 are disordered. A helical; Signal-anchor for type II membrane protein transmembrane segment spans residues Ser-49–Phe-69. The Extracellular portion of the chain corresponds to Gln-70–Leu-240. 3 cysteine pairs are disulfide-bonded: Cys-107-Cys-118, Cys-140-Cys-233, and Cys-208-Cys-225. A C-type lectin domain is found at Ser-129–Met-235. The Ca(2+) site is built by Val-149 and Glu-155. N-linked (GlcNAc...) asparagine glycosylation is present at Asn-190. Glu-200, Ser-202, and Glu-206 together coordinate Ca(2+). Alpha-D-mannopyranose-binding positions include Glu-200–Ser-202 and Glu-206. Ile-211–His-213 contributes to the N-acetyl-D-glucosamine binding site. Ca(2+)-binding residues include Asn-221 and Asp-222.

In terms of assembly, may interact with PTPN6 via its ITIM site. As to expression, expressed by myeloid cells (dendritic cells, macrophages, and neutrophils) and B-cells.

The protein resides in the cell membrane. In terms of biological role, C-type lectin receptor that binds carbohydrates mannose and fucose but also weakly interacts with N-acetylglucosamine (GlcNAc) in a Ca(2+)-dependent manner. Involved in regulating immune reactivity. Once triggered by antigen, it is internalized by clathrin-dependent endocytosis and delivers its antigenic cargo into the antigen presentation pathway resulting in cross-priming of CD8(+) T cells. This cross-presentation and cross-priming are enhanced by TLR7 and TLR8 agonists with increased expansion of the CD8(+) T cells, high production of IFNG and TNF with reduced levels of IL4, IL5 and IL13. In plasmacytoid dendritic cells, inhibits TLR9-mediated IFNA and TNF production. May be involved via its ITIM motif (immunoreceptor tyrosine-based inhibitory motifs) in the inhibition of B-cell-receptor-mediated calcium mobilization and protein tyrosine phosphorylation. The protein is C-type lectin domain family 4 member A (Clec4a) of Rattus norvegicus (Rat).